The following is a 92-amino-acid chain: Small ribosomal subunit protein uS19c (92 aa).

The protein belongs to the universal ribosomal protein uS19 family.

It localises to the plastid. Functionally, protein S19 forms a complex with S13 that binds strongly to the 16S ribosomal RNA. This is Small ribosomal subunit protein uS19c from Cuscuta obtusiflora (Peruvian dodder).